Reading from the N-terminus, the 802-residue chain is MEVCQELRKPALSLECGHCSFRGTDYENVQLHMGSIHPEFCDDMDAGGLGKLIFYQKSAKLFHCHKCFFTSKLYANVYYHITARHAASDKWSEQPKEQPSKDTESGKSPSPPERQNPAFDPAEARPTPALPMEAQKTSPSLCPESQASGPPVLEPQGAGPLISPEPQAPCLPAEASKAAPVPCPERVDPPCELPELEKPERGPSPESVKSALVSSKPPKHSSFADTGAAPSALSPESPVLATSPEPWGPSLSASPESRKPARTASPEPRKPSPAESPELWKPFPAIASEPRRPTPAVSPGSWKPGPPGSPRPWKSSPSATSGPWKSSKPVQPMSPGPWKPIPSVSPGPWKPAPSMSTASWKSSVSSGSWKTPPTSPESWKSGPPELRKTALPLSPEHWKAVPPVSPELRRPGPPLSPEIRSPAGSPELKKPSSSPDLWKVSPDQRKTSPASLDFPEPQKSSCGSPPDLWKSSFIMESQKPNVFSETRKHTASGSSESPKVASDIWKPVLSIDAEPRKSTLFPEPTKAVLPASPEPRKRALFPESRKHVFLPELPKSAVFSDAQKAPELSEEIQLEAVDNAKCDSLAQEGLLATPKKLLDEALSPSSKKLKKDSQENSDAELSSSEYIRADLDTLDTKGQESSSDQEQVDVESIDFSKENKMEMGSTEQAKNVLQFTEEKEAFISEEEIAKYMKRGKGKYYCKICCCRAMKKGAVLHHLVNKHNVHSPYKCTICGKAFLLESLLKNHVAAHGQSLLKCPRCNFESNFPRGFKKHLTHCQSRHNEEVNKKLMEALESPLEEQQI.

Met1 is modified (N-acetylmethionine). The span at Ser88–Ser105 shows a compositional bias: basic and acidic residues. A disordered region spans residues Ser88–Met475. Phosphoserine is present on Ser108. The span at Gln135–Ser148 shows a compositional bias: polar residues. Positions Glu185–Pro203 are enriched in basic and acidic residues. A phosphoserine mark is found at Ser204, Ser207, Ser234, Ser237, Ser243, Ser252, Ser254, Ser265, Ser272, Ser276, Ser298, Ser309, Ser334, Ser345, and Ser365. The interval Ala261–Lys479 is mediates interaction with MAD2L2. Pro residues predominate over residues Pro332 to Pro351. The segment covering Ser354–Ser368 has biased composition (low complexity). A compositionally biased stretch (polar residues) spans Trp369–Ser378. Residue Thr371 is modified to Phosphothreonine. Phosphoserine occurs at positions 375, 394, 405, 416, 421, 425, 432, 434, and 441. The segment at Val440 to Ala580 is mediates localization to the spindle and the kinetochore and is required for the attachment of spindle microtubules to the kinetochore. At Thr447 the chain carries Phosphothreonine. Phosphoserine is present on residues Ser448, Ser451, and Ser461. Residue Lys479 is modified to N6-acetyllysine; alternate. Residue Lys479 forms a Glycyl lysine isopeptide (Lys-Gly) (interchain with G-Cter in SUMO2); alternate linkage. Ser497, Ser502, and Ser532 each carry phosphoserine. Lys555 participates in a covalent cross-link: Glycyl lysine isopeptide (Lys-Gly) (interchain with G-Cter in SUMO2). Residues Lys581–Ile802 are mediates localization to the chromosome and the spindle and negatively regulates chromosome alignment. Thr593 carries the post-translational modification Phosphothreonine. Lys596 is covalently cross-linked (Glycyl lysine isopeptide (Lys-Gly) (interchain with G-Cter in SUMO2)). A phosphoserine mark is found at Ser603, Ser605, Ser617, Ser622, Ser641, Ser642, and Ser643. Residues Ser603 to Glu625 are disordered. Lys660 participates in a covalent cross-link: Glycyl lysine isopeptide (Lys-Gly) (interchain with G-Cter in SUMO2). Position 665 is a phosphoserine (Ser665). A Glycyl lysine isopeptide (Lys-Gly) (interchain with G-Cter in SUMO2) cross-link involves residue Lys679. A Phosphoserine modification is found at Ser726. A C2H2-type zinc finger spans residues Tyr728–His750.

Interacts with MAD2L2. Interacts with POGZ, CBX1, CBX3 and CBX5. Post-translationally, phosphorylated by CDK1. Mitotic phosphorylation is required for the attachment of spindle microtubules to the kinetochore.

The protein resides in the nucleus. The protein localises to the chromosome. It localises to the centromere. It is found in the kinetochore. Its subcellular location is the cytoplasm. The protein resides in the cytoskeleton. The protein localises to the spindle. Functionally, required for proper alignment of chromosomes at metaphase and their accurate segregation during mitosis. Involved in the maintenance of spindle microtubules attachment to the kinetochore during sister chromatid biorientation. May recruit CENPE and CENPF to the kinetochore. The protein is Chromosome alignment-maintaining phosphoprotein 1 (Champ1) of Mus musculus (Mouse).